Reading from the N-terminus, the 518-residue chain is Arrestin-related trafficking adapter 10 (518 aa).

Lysine 118 participates in a covalent cross-link: Glycyl lysine isopeptide (Lys-Gly) (interchain with G-Cter in ubiquitin).

The protein belongs to the ART10 family. In terms of assembly, interacts with RSP5. Ubiquitinated by RSP5.

Its subcellular location is the cytoplasm. Functionally, may regulate endocytosis by recruiting RSP5 ubiquitin ligase activity to specific plasma membrane proteins in response to extracellular stimuli. The protein is Arrestin-related trafficking adapter 10 (ART10) of Saccharomyces cerevisiae (strain ATCC 204508 / S288c) (Baker's yeast).